An 834-amino-acid chain; its full sequence is DNA gyrase subunit A (834 aa).

A Topo IIA-type catalytic domain is found at 34 to 500 (LPDIRDGLKP…ADDIRDIEDI (467 aa)). The O-(5'-phospho-DNA)-tyrosine intermediate role is filled by Tyr-122. The short motif at 527–533 (QRRGGHG) is the GyrA-box element. Residues 810–834 (LSSNENDDEVLSGSEEECSDTVSLR) are disordered. Acidic residues predominate over residues 814–828 (ENDDEVLSGSEEECS).

It belongs to the type II topoisomerase GyrA/ParC subunit family. In terms of assembly, heterotetramer, composed of two GyrA and two GyrB chains. In the heterotetramer, GyrA contains the active site tyrosine that forms a transient covalent intermediate with DNA, while GyrB binds cofactors and catalyzes ATP hydrolysis.

The protein resides in the cytoplasm. It catalyses the reaction ATP-dependent breakage, passage and rejoining of double-stranded DNA.. A type II topoisomerase that negatively supercoils closed circular double-stranded (ds) DNA in an ATP-dependent manner to modulate DNA topology and maintain chromosomes in an underwound state. Negative supercoiling favors strand separation, and DNA replication, transcription, recombination and repair, all of which involve strand separation. Also able to catalyze the interconversion of other topological isomers of dsDNA rings, including catenanes and knotted rings. Type II topoisomerases break and join 2 DNA strands simultaneously in an ATP-dependent manner. The polypeptide is DNA gyrase subunit A (Chlamydia pneumoniae (Chlamydophila pneumoniae)).